The following is a 363-amino-acid chain: Cyanuric acid amidohydrolase (363 aa).

An RU A region spans residues 1 to 104; sequence MYHIDVFRIP…TVFARRPAID (104 aa). Substrate contacts are provided by residues arginine 52 and 83-84; that span reads SG. Positions 112–249 are RU B; the sequence is RLTLGIAFTR…NVVIAIGMSE (138 aa). Residue lysine 162 is part of the active site. Substrate-binding positions include arginine 194 and 232–233; that span reads SA. Residue serine 232 is the Nucleophile of the active site. An RU C region spans residues 255-363; it reads LVIAHGVMSD…GGPFAVIARA (109 aa). Glutamate 297 lines the Mg(2+) pocket. Residues arginine 324 and 343–344 each bind substrate; that span reads SG. Positions 346, 349, 350, 351, and 354 each coordinate Mg(2+).

Belongs to the cyclic amide hydrolase (CyAH) family. In terms of assembly, homotetramer.

It carries out the reaction cyanurate + H2O = 1-carboxybiuret + H(+). It participates in xenobiotic degradation; atrazine degradation; biuret from cyanurate: step 1/1. Its activity is regulated as follows. Inhibited by barbituric acid. Functionally, responsible for the hydrolysis of cyanuric acid, an intermediate formed during catabolism of s-triazine based compounds in herbicides such as atrazine and polymers such as melamine. Catalyzes the hydrolytic opening of the s-triazine ring of cyanuric acid (2,4,6-trihydroxy-s-triazine) to yield carbon dioxide and carboxybiuret, which spontaneously decarboxylates to biuret. The sequence is that of Cyanuric acid amidohydrolase (atzD) from Pseudomonas sp. (strain ADP).